Consider the following 423-residue polypeptide: 3-phosphoshikimate 1-carboxyvinyltransferase (423 aa).

Positions 19, 20, and 24 each coordinate 3-phosphoshikimate. Residue Lys-19 coordinates phosphoenolpyruvate. Residues Gly-89 and Arg-118 each coordinate phosphoenolpyruvate. Residues Ser-164, Ser-165, Gln-166, Ser-192, Asp-304, and Lys-331 each contribute to the 3-phosphoshikimate site. A phosphoenolpyruvate-binding site is contributed by Gln-166. Asp-304 acts as the Proton acceptor in catalysis. Phosphoenolpyruvate contacts are provided by Arg-335 and Arg-377.

This sequence belongs to the EPSP synthase family. Monomer.

It localises to the cytoplasm. It catalyses the reaction 3-phosphoshikimate + phosphoenolpyruvate = 5-O-(1-carboxyvinyl)-3-phosphoshikimate + phosphate. It participates in metabolic intermediate biosynthesis; chorismate biosynthesis. In terms of biological role, catalyzes the transfer of the enolpyruvyl moiety of phosphoenolpyruvate (PEP) to the 5-hydroxyl of shikimate-3-phosphate (S3P) to produce enolpyruvyl shikimate-3-phosphate and inorganic phosphate. This Korarchaeum cryptofilum (strain OPF8) protein is 3-phosphoshikimate 1-carboxyvinyltransferase.